Consider the following 303-residue polypeptide: Nucleotide-binding protein USA300HOU_0794 (303 aa).

Gly18–Ser25 is a binding site for ATP. Asp69–Gly72 contributes to the GTP binding site.

The protein belongs to the RapZ-like family.

In terms of biological role, displays ATPase and GTPase activities. The polypeptide is Nucleotide-binding protein USA300HOU_0794 (Staphylococcus aureus (strain USA300 / TCH1516)).